A 507-amino-acid chain; its full sequence is Arylsulfatase A (507 aa).

The first 18 residues, 1–18 (MGAPRSLLLALAAGLAVA), serve as a signal peptide directing secretion. Ca(2+) is bound by residues Asp-29, Asp-30, and Cys-69. The active-site Nucleophile is the Cys-69. Cys-69 carries the post-translational modification 3-oxoalanine (Cys). Lys-123 contributes to the substrate binding site. The active site involves His-125. Ser-150 serves as a coordination point for substrate. Disulfide bonds link Cys-156–Cys-172 and Cys-161–Cys-168. Asn-158 carries an N-linked (GlcNAc...) asparagine glycan. The N-linked (GlcNAc...) asparagine glycan is linked to Asn-184. His-229 is a substrate binding site. Residues Asp-281 and Asn-282 each contribute to the Ca(2+) site. 4 disulfides stabilise this stretch: Cys-300–Cys-414, Cys-488–Cys-500, Cys-489–Cys-502, and Cys-493–Cys-499. Residue Lys-302 coordinates substrate. A glycan (N-linked (GlcNAc...) asparagine) is linked at Asn-350.

It belongs to the sulfatase family. In terms of assembly, homodimer at neutral pH and homooctamer at acidic pH. Exists both as a single chain of 58 kDa (component A) or as a chain of 50 kDa (component B) linked by disulfide bond(s) to a 7 kDa chain (component C). Interacts with SUMF1. Requires Ca(2+) as cofactor. The conversion to 3-oxoalanine (also known as C-formylglycine, FGly), of a serine or cysteine residue in prokaryotes and of a cysteine residue in eukaryotes, is critical for catalytic activity. This post-translational modification is severely defective in multiple sulfatase deficiency (MSD).

It localises to the endoplasmic reticulum. It is found in the lysosome. The catalysed reaction is an N-acyl-1-beta-D-(3-O-sulfo)-galactosyl-sphing-4-enine + H2O = a beta-D-galactosyl-(1&lt;-&gt;1')-N-acylsphing-4-enine + sulfate + H(+). Its activity is regulated as follows. Inhibited by phosphate. The phosphate forms a covalent bond with the active site 3-oxoalanine. In terms of biological role, hydrolyzes cerebroside sulfate. The sequence is that of Arylsulfatase A (ARSA) from Homo sapiens (Human).